The sequence spans 231 residues: Cytochrome c oxidase subunit 2 (231 aa).

At 1–14 (MAHPSQLGLQDAAS) the chain is on the mitochondrial intermembrane side. A helical membrane pass occupies residues 15 to 45 (PVMEELLHFHDHALMIVFLISTLVFYIILAM). At 46–59 (MTTKMTDKYILDAQ) the chain is on the mitochondrial matrix side. The helical transmembrane segment at 60-87 (EIEIVWTLLPAIVLILVALPSLRILYLI) threads the bilayer. Residues 88–231 (DEVENPHLTI…WSSSMLEEAX (144 aa)) lie on the Mitochondrial intermembrane side of the membrane. Residues His161, Cys196, Glu198, Cys200, His204, and Met207 each coordinate Cu cation. Glu198 contributes to the Mg(2+) binding site.

The protein belongs to the cytochrome c oxidase subunit 2 family. In terms of assembly, component of the cytochrome c oxidase (complex IV, CIV), a multisubunit enzyme composed of 14 subunits. The complex is composed of a catalytic core of 3 subunits MT-CO1, MT-CO2 and MT-CO3, encoded in the mitochondrial DNA, and 11 supernumerary subunits COX4I, COX5A, COX5B, COX6A, COX6B, COX6C, COX7A, COX7B, COX7C, COX8 and NDUFA4, which are encoded in the nuclear genome. The complex exists as a monomer or a dimer and forms supercomplexes (SCs) in the inner mitochondrial membrane with NADH-ubiquinone oxidoreductase (complex I, CI) and ubiquinol-cytochrome c oxidoreductase (cytochrome b-c1 complex, complex III, CIII), resulting in different assemblies (supercomplex SCI(1)III(2)IV(1) and megacomplex MCI(2)III(2)IV(2)). Found in a complex with TMEM177, COA6, COX18, COX20, SCO1 and SCO2. Interacts with TMEM177 in a COX20-dependent manner. Interacts with COX20. Interacts with COX16. It depends on Cu cation as a cofactor.

It is found in the mitochondrion inner membrane. The catalysed reaction is 4 Fe(II)-[cytochrome c] + O2 + 8 H(+)(in) = 4 Fe(III)-[cytochrome c] + 2 H2O + 4 H(+)(out). Its function is as follows. Component of the cytochrome c oxidase, the last enzyme in the mitochondrial electron transport chain which drives oxidative phosphorylation. The respiratory chain contains 3 multisubunit complexes succinate dehydrogenase (complex II, CII), ubiquinol-cytochrome c oxidoreductase (cytochrome b-c1 complex, complex III, CIII) and cytochrome c oxidase (complex IV, CIV), that cooperate to transfer electrons derived from NADH and succinate to molecular oxygen, creating an electrochemical gradient over the inner membrane that drives transmembrane transport and the ATP synthase. Cytochrome c oxidase is the component of the respiratory chain that catalyzes the reduction of oxygen to water. Electrons originating from reduced cytochrome c in the intermembrane space (IMS) are transferred via the dinuclear copper A center (CU(A)) of subunit 2 and heme A of subunit 1 to the active site in subunit 1, a binuclear center (BNC) formed by heme A3 and copper B (CU(B)). The BNC reduces molecular oxygen to 2 water molecules using 4 electrons from cytochrome c in the IMS and 4 protons from the mitochondrial matrix. In Latimeria chalumnae (Coelacanth), this protein is Cytochrome c oxidase subunit 2 (MT-CO2).